Consider the following 2019-residue polypeptide: MANFLLPRGTSSFRRFTRESLAAIEKRMAEKQARGSATSQESREGLPEEEAPRPQLDLQASKKLPDLYGNPPRELIGEPLEDLDPFYSTQKTFIVLNKGKTIFRFSATNALYVLSPFHPVRRAAVKILVHSLFSMLIMCTILTNCVFMAQHDPPPWTKYVEYTFTAIYTFESLVKILARGFCLHAFTFLRDPWNWLDFSVIVMAYTTEFVDLGNVSALRTFRVLRALKTISVISGLKTIVGALIQSVKKLADVMVLTVFCLSVFALIGLQLFMGNLRHKCVRNFTELNGTNGSVEADGIVWNSLDVYLNDPANYLLKNGTTDVLLCGNSSDAGTCPEGYRCLKAGENPDHGYTSFDSFAWAFLALFRLMTQDCWERLYQQTLRSAGKIYMIFFMLVIFLGSFYLVNLILAVVAMAYEEQNQATIAETEEKEKRFQEAMEMLKKEHEALTIRGVDTVSRSSLEMSPLAPVTNHERRSKRRKRLSSGTEDGGDDRLPKSDSEDGPRALNQLSLTHGLSRTSMRPRSSRGSIFTFRRRDQGSEADFADDENSTAGESESHRTSLLVPWPLRRPSTQGQPGFGTSAPGHVLNGKRNSTVDCNGVVSLLGAGDAEATSPGSHLLRPIVLDRPPDTTTPSEEPGGPQMLTPQAPCADGFEEPGARQRALSAVSVLTSALEELEESHRKCPPCWNRFAQHYLIWECCPLWMSIKQKVKFVVMDPFADLTITMCIVLNTLFMALEHYNMTAEFEEMLQVGNLVFTGIFTAEMTFKIIALDPYYYFQQGWNIFDSIIVILSLMELGLSRMGNLSVLRSFRLLRVFKLAKSWPTLNTLIKIIGNSVGALGNLTLVLAIIVFIFAVVGMQLFGKNYSELRHRISDSGLLPRWHMMDFFHAFLIIFRILCGEWIETMWDCMEVSGQSLCLLVFLLVMVIGNLVVLNLFLALLLSSFSADNLTAPDEDGEMNNLQLALARIQRGLRFVKRTTWDFCCGLLRRRPKKPAALATHSQLPSCIAAPRSPPPPEVEKAPPARKETRFEEDKRPGQGTPGDTEPVCVPIAVAESDTDDQEEDEENSLGTEEEESSKQESQVVSGGHEPPQEPRAWSQVSETTSSEAEASTSQADWQQEREAEPRAPGCGETPEDSYSEGSTADMTNTADLLEQIPDLGEDVKDPEDCFTEGCVRRCPCCMVDTTQAPGKVWWRLRKTCYRIVEHSWFETFIIFMILLSSGALAFEDIYLEERKTIKVLLEYADKMFTYVFVLEMLLKWVAYGFKKYFTNAWCWLDFLIVDVSLVSLVANTLGFAEMGPIKSLRTLRALRPLRALSRFEGMRVVVNALVGAIPSIMNVLLVCLIFWLIFSIMGVNLFAGKFGRCINQTEGDLPLNYTIVNNKSECESFNVTGELYWTKVKVNFDNVGAGYLALLQVATFKGWMDIMYAAVDSRGYEEQPQWEDNLYMYIYFVVFIIFGSFFTLNLFIGVIIDNFNQQKKKLGGQDIFMTEEQKKYYNAMKKLGSKKPQKPIPRPLNKYQGFIFDIVTKQAFDVTIMFLICLNMVTMMVETDDQSPEKVNILAKINLLFVAIFTGECIVKMAALRHYYFTNSWNIFDFVVVILSIVGTVLSDIIQKYFFSPTLFRVIRLARIGRILRLIRGAKGIRTLLFALMMSLPALFNIGLLLFLVMFIYSIFGMANFAYVKWEAGIDDMFNFQTFANSMLCLFQITTSAGWDGLLSPILNTGPPYCDPNLPNSNGSRGNCGSPAVGILFFTTYIIISFLIVVNMYIAIILENFSVATEESTEPLSEDDFDMFYEIWEKFDPEATQFIEYLALSDFADALSEPLRIAKPNQISLINMDLPMVSGDRIHCMDILFAFTKRVLGESGEMDALKIQMEEKFMAANPSKISYEPITTTLRRKHEEVSATVIQRAFRRHLLQRSVKHASFLFRQQAGSSGLSDEDAPEREGLIAYMMNENFSRRSGPLSSSSISSTSFPPSYDSVTRATSDNLPVRASDYSRSEDLADFPPSPDRDRESIV.

The Cytoplasmic segment spans residues 1-129; it reads MANFLLPRGT…VRRAAVKILV (129 aa). The disordered stretch occupies residues 27–66; the sequence is RMAEKQARGSATSQESREGLPEEEAPRPQLDLQASKKLPD. Ser36 bears the Phosphoserine mark. The residue at position 38 (Thr38) is a Phosphothreonine. Basic and acidic residues predominate over residues 41-52; the sequence is ESREGLPEEEAP. The stretch at 113–420 is one I repeat; sequence VLSPFHPVRR…VVAMAYEEQN (308 aa). The helical transmembrane segment at 130 to 149 threads the bilayer; the sequence is HSLFSMLIMCTILTNCVFMA. The Extracellular portion of the chain corresponds to 150–157; it reads QHDPPPWT. Residues 158–179 form a helical membrane-spanning segment; it reads KYVEYTFTAIYTFESLVKILAR. At 180-188 the chain is on the cytoplasmic side; the sequence is GFCLHAFTF. A helical transmembrane segment spans residues 189 to 209; that stretch reads LRDPWNWLDFSVIVMAYTTEF. Residues 210–216 are Extracellular-facing; that stretch reads VDLGNVS. The N-linked (GlcNAc...) asparagine glycan is linked to Asn214. Residues 217-236 traverse the membrane as a helical segment; it reads ALRTFRVLRALKTISVISGL. The Cytoplasmic segment spans residues 237 to 249; sequence KTIVGALIQSVKK. The helical transmembrane segment at 250 to 272 threads the bilayer; it reads LADVMVLTVFCLSVFALIGLQLF. Over 273–357 the chain is Extracellular; the sequence is MGNLRHKCVR…PDHGYTSFDS (85 aa). The cysteines at positions 280 and 335 are disulfide-linked. N-linked (GlcNAc...) asparagine glycosylation is found at Asn283, Asn288, Asn291, Asn318, and Asn328. An intramembrane region (pore-forming) is located at residues 358–378; the sequence is FAWAFLALFRLMTQDCWERLY. Topologically, residues 379–386 are extracellular; sequence QQTLRSAG. The chain crosses the membrane as a helical span at residues 387 to 413; the sequence is KIYMIFFMLVIFLGSFYLVNLILAVVA. At 414–719 the chain is on the cytoplasmic side; it reads MAYEEQNQAT…VKFVVMDPFA (306 aa). Residues Ser457, Ser460, Ser483, and Ser484 each carry the phosphoserine modification. Disordered regions lie at residues 461 to 575 and 610 to 647; these read LEMS…TQGQ and EATS…TPQA. A Phosphothreonine modification is found at Thr486. Over residues 491-503 the composition is skewed to basic and acidic residues; it reads DDRLPKSDSEDGP. 2 positions are modified to phosphoserine: Ser497 and Ser510. Over residues 507 to 528 the composition is skewed to polar residues; the sequence is NQLSLTHGLSRTSMRPRSSRGS. Arg526 carries the dimethylated arginine; alternate modification. At Arg526 the chain carries Omega-N-methylarginine; alternate. Phosphoserine occurs at positions 539 and 571. Residues Ser664 and Ser667 each carry the phosphoserine modification. Residues 699–971 form an II repeat; that stretch reads CCPLWMSIKQ…QLALARIQRG (273 aa). A helical transmembrane segment spans residues 720–737; it reads DLTITMCIVLNTLFMALE. The Extracellular segment spans residues 738–746; the sequence is HYNMTAEFE. N-linked (GlcNAc...) asparagine glycosylation is present at Asn740. A helical membrane pass occupies residues 747-769; sequence EMLQVGNLVFTGIFTAEMTFKII. Over 770–775 the chain is Cytoplasmic; it reads ALDPYY. The helical transmembrane segment at 776–796 threads the bilayer; the sequence is YFQQGWNIFDSIIVILSLMEL. At 797 to 806 the chain is on the extracellular side; the sequence is GLSRMGNLSV. N-linked (GlcNAc...) asparagine glycosylation occurs at Asn803. Residues 807 to 821 form a helical membrane-spanning segment; it reads LRSFRLLRVFKLAKS. Residues 822 to 838 are Cytoplasmic-facing; that stretch reads WPTLNTLIKIIGNSVGA. Residues 839-860 form a helical membrane-spanning segment; the sequence is LGNLTLVLAIIVFIFAVVGMQL. Topologically, residues 861–886 are extracellular; the sequence is FGKNYSELRHRISDSGLLPRWHMMDF. A glycan (N-linked (GlcNAc...) asparagine) is linked at Asn864. An intramembrane region (pore-forming) is located at residues 887-905; that stretch reads FHAFLIIFRILCGEWIETM. At 906 to 914 the chain is on the extracellular side; that stretch reads WDCMEVSGQ. Residues Cys908 and Cys917 are joined by a disulfide bond. Residues 915-943 form a helical membrane-spanning segment; sequence SLCLLVFLLVMVIGNLVVLNLFLALLLSS. Residues 944–1205 are Cytoplasmic-facing; the sequence is FSADNLTAPD…LRKTCYRIVE (262 aa). The segment at 1000 to 1144 is disordered; sequence HSQLPSCIAA…EDSYSEGSTA (145 aa). A compositionally biased stretch (basic and acidic residues) spans 1017-1036; that stretch reads EVEKAPPARKETRFEEDKRP. Acidic residues predominate over residues 1056-1075; the sequence is SDTDDQEEDEENSLGTEEEE. Residues 1098 to 1115 show a composition bias toward low complexity; that stretch reads SQVSETTSSEAEASTSQA. An III repeat occupies 1189–1503; the sequence is PGKVWWRLRK…KKYYNAMKKL (315 aa). Residues 1206 to 1227 traverse the membrane as a helical segment; sequence HSWFETFIIFMILLSSGALAFE. Topologically, residues 1228–1238 are extracellular; it reads DIYLEERKTIK. A helical transmembrane segment spans residues 1239 to 1261; the sequence is VLLEYADKMFTYVFVLEMLLKWV. The Cytoplasmic segment spans residues 1262 to 1270; sequence AYGFKKYFT. The chain crosses the membrane as a helical span at residues 1271–1293; that stretch reads NAWCWLDFLIVDVSLVSLVANTL. The Extracellular segment spans residues 1294 to 1299; that stretch reads GFAEMG. Residues 1300-1319 form a helical membrane-spanning segment; it reads PIKSLRTLRALRPLRALSRF. Topologically, residues 1320–1332 are cytoplasmic; sequence EGMRVVVNALVGA. The helical transmembrane segment at 1333–1357 threads the bilayer; it reads IPSIMNVLLVCLIFWLIFSIMGVNL. Over 1358 to 1402 the chain is Extracellular; that stretch reads FAGKFGRCINQTEGDLPLNYTIVNNKSECESFNVTGELYWTKVKV. Asn1367, Asn1376, Asn1382, and Asn1390 each carry an N-linked (GlcNAc...) asparagine glycan. An intramembrane region (pore-forming) is located at residues 1403 to 1424; the sequence is NFDNVGAGYLALLQVATFKGWM. Residues 1425 to 1447 lie on the Extracellular side of the membrane; that stretch reads DIMYAAVDSRGYEEQPQWEDNLY. Residues 1448–1472 traverse the membrane as a helical segment; it reads MYIYFVVFIIFGSFFTLNLFIGVII. Residues 1473–1530 are Cytoplasmic-facing; that stretch reads DNFNQQKKKLGGQDIFMTEEQKKYYNAMKKLGSKKPQKPIPRPLNKYQGFIFDIVTKQ. Ser1505 carries the post-translational modification Phosphoserine; by PKC. Residues 1512–1809 form an IV repeat; the sequence is IPRPLNKYQG…WEKFDPEATQ (298 aa). A helical transmembrane segment spans residues 1531–1549; the sequence is AFDVTIMFLICLNMVTMMV. At 1550–1560 the chain is on the extracellular side; that stretch reads ETDDQSPEKVN. Residues 1561 to 1582 form a helical membrane-spanning segment; the sequence is ILAKINLLFVAIFTGECIVKMA. Residues 1583–1591 are Cytoplasmic-facing; sequence ALRHYYFTN. A helical transmembrane segment spans residues 1592 to 1614; that stretch reads SWNIFDFVVVILSIVGTVLSDII. Residues 1615–1621 are Extracellular-facing; sequence QKYFFSP. The helical transmembrane segment at 1622–1642 threads the bilayer; that stretch reads TLFRVIRLARIGRILRLIRGA. Over 1643-1652 the chain is Cytoplasmic; sequence KGIRTLLFAL. The helical transmembrane segment at 1653-1681 threads the bilayer; it reads MMSLPALFNIGLLLFLVMFIYSIFGMANF. Topologically, residues 1682-1699 are extracellular; it reads AYVKWEAGIDDMFNFQTF. Residues 1700–1716 constitute an intramembrane region (pore-forming); sequence ANSMLCLFQITTSAGWD. The Extracellular segment spans residues 1717–1747; it reads GLLSPILNTGPPYCDPNLPNSNGSRGNCGSP. Residues 1748–1773 form a helical membrane-spanning segment; the sequence is AVGILFFTTYIIISFLIVVNMYIAII. Residues 1774–2019 are Cytoplasmic-facing; it reads LENFSVATEE…SPDRDRESIV (246 aa). The segment at 1841-1903 is interaction with FGF13; sequence DLPMVSGDRI…ITTTLRRKHE (63 aa). The IQ domain occupies 1903–1932; it reads EEVSATVIQRAFRRHLLQRSVKHASFLFRQ. The span at 1963–1982 shows a compositional bias: low complexity; it reads SGPLSSSSISSTSFPPSYDS. Positions 1963 to 2019 are disordered; it reads SGPLSSSSISSTSFPPSYDSVTRATSDNLPVRASDYSRSEDLADFPPSPDRDRESIV. Residues 1977-1980 are interaction with NEDD4, NEDD4L and WWP2; the sequence is PPSY.

The protein belongs to the sodium channel (TC 1.A.1.10) family. Nav1.5/SCN5A subfamily. Cannot form the same regulatory interactions with beta subunits as other Navs do. Interacts with the PDZ domain of the syntrophin SNTA1, SNTB1 and SNTB2. Interacts with NEDD4, NEDD4L, WWP2 and GPD1L. Interacts with CALM. Interacts with FGF13; the interaction is direct and may regulate SNC5A density at membranes and function. Interacts with FGF12 and FGF14. Interacts with ANK3. Interacts with PKP2 (via N-terminus). Interacts with TMEM233. Interacts with XIRP2; the interaction is required for normal action potential configuration in the heart. Post-translationally, phosphorylation at Ser-1505 by PKC in a highly conserved cytoplasmic loop slows inactivation of the sodium channel and reduces peak sodium currents. Regulated through phosphorylation by CaMK2D. In terms of processing, ubiquitinated by NEDD4L; which promotes its endocytosis. Does not seem to be ubiquitinated by NEDD4 or WWP2. Lacks the cysteine which covalently binds the conotoxin GVIIJ. This cysteine (position 868) is speculated in other sodium channel subunits alpha to be implied in covalent binding with the sodium channel subunit beta-2 or beta-4. Post-translationally, N-glycosylated at Asn-318, probably hinders potential interaction with regulatory subunits. In terms of tissue distribution, expressed in the myocardium (at protein level).

It is found in the cell membrane. Its subcellular location is the cytoplasm. The protein resides in the perinuclear region. The protein localises to the sarcolemma. It localises to the T-tubule. It is found in the cell junction. The enzyme catalyses Na(+)(in) = Na(+)(out). Its activity is regulated as follows. Channel inactivation is regulated by intracellular calcium levels. It is a tetrodotoxin-resistant voltage-gated Na(+) channel (Nav). Functionally, pore-forming subunit of Nav1.5, a voltage-gated sodium (Nav) channel that directly mediates the depolarizing phase of action potentials in excitable membranes. Navs, also called VGSCs (voltage-gated sodium channels) or VDSCs (voltage-dependent sodium channels), operate by switching between closed and open conformations depending on the voltage difference across the membrane. In the open conformation they allow Na(+) ions to selectively pass through the pore, along their electrochemical gradient. The influx of Na(+) ions provokes membrane depolarization, initiating the propagation of electrical signals throughout cells and tissues. Nav1.5 is the predominant sodium channel expressed in myocardial cells and it is responsible for the initial upstroke of the action potential in cardiac myocytes, thereby initiating the heartbeat. Required for normal electrical conduction including formation of the infranodal ventricular conduction system and normal action potential configuration, as a result of its interaction with XIRP2. The sequence is that of Sodium channel protein type 5 subunit alpha from Mus musculus (Mouse).